We begin with the raw amino-acid sequence, 481 residues long: Histidine--tRNA ligase, cytoplasmic (481 aa).

The disordered stretch occupies residues 1-48; the sequence is MSEPVVDNVTNKVEKMEVKEKTSAPPKEKKEKKSNKVQLKTPKGTQDY. The segment covering 12-31 has biased composition (basic and acidic residues); the sequence is KVEKMEVKEKTSAPPKEKKE.

The protein belongs to the class-II aminoacyl-tRNA synthetase family.

It localises to the cytoplasm. It catalyses the reaction tRNA(His) + L-histidine + ATP = L-histidyl-tRNA(His) + AMP + diphosphate + H(+). In Dictyostelium discoideum (Social amoeba), this protein is Histidine--tRNA ligase, cytoplasmic (hisS).